A 106-amino-acid chain; its full sequence is ATP-dependent Clp protease adapter protein ClpS (106 aa).

This sequence belongs to the ClpS family. As to quaternary structure, binds to the N-terminal domain of the chaperone ClpA.

Functionally, involved in the modulation of the specificity of the ClpAP-mediated ATP-dependent protein degradation. The polypeptide is ATP-dependent Clp protease adapter protein ClpS (Serratia proteamaculans (strain 568)).